The chain runs to 362 residues: Dihydroorotate dehydrogenase (quinone) (362 aa).

FMN is bound by residues 62-66 and Thr-86; that span reads AGYDK. Lys-66 is a binding site for substrate. 111-115 contacts substrate; sequence NRLGF. Positions 139 and 170 each coordinate FMN. Residue Asn-170 coordinates substrate. Catalysis depends on Ser-173, which acts as the Nucleophile. Position 175 (Asn-175) interacts with substrate. FMN-binding residues include Lys-215 and Ser-243. 244–245 contacts substrate; that stretch reads NT. FMN is bound by residues Gly-266, Gly-295, and 316–317; that span reads YS.

This sequence belongs to the dihydroorotate dehydrogenase family. Type 2 subfamily. In terms of assembly, monomer. FMN is required as a cofactor.

Its subcellular location is the cell membrane. The catalysed reaction is (S)-dihydroorotate + a quinone = orotate + a quinol. It functions in the pathway pyrimidine metabolism; UMP biosynthesis via de novo pathway; orotate from (S)-dihydroorotate (quinone route): step 1/1. Catalyzes the conversion of dihydroorotate to orotate with quinone as electron acceptor. This is Dihydroorotate dehydrogenase (quinone) from Rhizobium meliloti (strain 1021) (Ensifer meliloti).